The primary structure comprises 137 residues: Large ribosomal subunit protein uL16 (137 aa).

The protein belongs to the universal ribosomal protein uL16 family. In terms of assembly, part of the 50S ribosomal subunit.

Binds 23S rRNA and is also seen to make contacts with the A and possibly P site tRNAs. The protein is Large ribosomal subunit protein uL16 of Pseudomonas aeruginosa (strain LESB58).